We begin with the raw amino-acid sequence, 280 residues long: Ribosomal RNA small subunit methyltransferase A (280 aa).

Residues H15, L17, G42, E64, D89, and N109 each contribute to the S-adenosyl-L-methionine site.

The protein belongs to the class I-like SAM-binding methyltransferase superfamily. rRNA adenine N(6)-methyltransferase family. RsmA subfamily.

The protein localises to the cytoplasm. The catalysed reaction is adenosine(1518)/adenosine(1519) in 16S rRNA + 4 S-adenosyl-L-methionine = N(6)-dimethyladenosine(1518)/N(6)-dimethyladenosine(1519) in 16S rRNA + 4 S-adenosyl-L-homocysteine + 4 H(+). Specifically dimethylates two adjacent adenosines (A1518 and A1519) in the loop of a conserved hairpin near the 3'-end of 16S rRNA in the 30S particle. May play a critical role in biogenesis of 30S subunits. This Synechococcus sp. (strain WH7803) protein is Ribosomal RNA small subunit methyltransferase A.